A 465-amino-acid polypeptide reads, in one-letter code: Ribulose bisphosphate carboxylase large chain (465 aa).

Lysine 4 carries the N6,N6,N6-trimethyllysine modification. Substrate-binding residues include asparagine 113 and threonine 163. Lysine 165 acts as the Proton acceptor in catalysis. Lysine 167 serves as a coordination point for substrate. Mg(2+) is bound by residues lysine 191, aspartate 193, and glutamate 194. At lysine 191 the chain carries N6-carboxylysine. Catalysis depends on histidine 284, which acts as the Proton acceptor. Substrate-binding residues include arginine 285, histidine 317, and serine 369.

It belongs to the RuBisCO large chain family. Type I subfamily. In terms of assembly, heterohexadecamer of 8 large chains and 8 small chains; disulfide-linked. The disulfide link is formed within the large subunit homodimers. The cofactor is Mg(2+). The disulfide bond which can form in the large chain dimeric partners within the hexadecamer appears to be associated with oxidative stress and protein turnover.

The protein resides in the plastid. Its subcellular location is the chloroplast. The enzyme catalyses 2 (2R)-3-phosphoglycerate + 2 H(+) = D-ribulose 1,5-bisphosphate + CO2 + H2O. It carries out the reaction D-ribulose 1,5-bisphosphate + O2 = 2-phosphoglycolate + (2R)-3-phosphoglycerate + 2 H(+). Its function is as follows. RuBisCO catalyzes two reactions: the carboxylation of D-ribulose 1,5-bisphosphate, the primary event in carbon dioxide fixation, as well as the oxidative fragmentation of the pentose substrate in the photorespiration process. Both reactions occur simultaneously and in competition at the same active site. The polypeptide is Ribulose bisphosphate carboxylase large chain (Platytheca verticillata).